The primary structure comprises 57 residues: uncharacterized protein (57 aa).

The segment at 34–57 is disordered; that stretch reads QGKRGETEGQIEISRKAGHPAPAF.

This is an uncharacterized protein from Saccharomyces cerevisiae (strain ATCC 204508 / S288c) (Baker's yeast).